The sequence spans 716 residues: MGSHGKGKRDRSGRQKKRRDESESGSESESYTSDSDGSDDLSPPRSSRRKKGSSSRRTRRRSSSDDSSDSDGGRKSKKRSSSKDYSEEKVTEYMSKKAQKKALRAAKKLKTQSVSGYSNDSNPFGDSNLTETFVWRKKIEKDVHRGVPLEEFSVKAEKRRHRERMTEVEKVKKRREERAVEKARHEEEMALLARERARAEFHDWEKKEEEFHFDQSKVRSEIRLREGRLKPIDVLCKHLDGSDDLDIELSEPYMVFKKKKVRIGIWLNFQLSITNVYVEAEYKNDSACLLLRSRVDILLNKGLTVKDMEELRDDIKMYLDLDRATPTRVQYWEALIVVCDWELAEARKRDALDRARVRGEEPPAELLAQERGLHAGVEADVRKLLDGKTHAELVELQLDIESQLRSGSAKVVEYWEAVLKRLEIYKAKACLKEIHAEMLRRHLHRLEQLSEGEDDVEVNPGLTRVVEENEEEINDTNLSDAEEAFSPEPVAEEEEADEAAEAAGSFSPELMHGDDREEAIDPEEDKKLLQMKRMIVLEKQKKRLKEAMDSKPAPVEDNLELKAMKAMGAMEEGDAIFGSNAEVNLDSEVYWWHDKYRPRKPKYFNRVHTGYEWNKYNQTHYDHDNPPPKIVQGYKFNIFYPDLVDKIKAPIYTIEKDGTSAETCMIRFHAGPPYEDIAFRIVNKEWEYSHKKGFKCTFERGILHLYFNFKRHRYRR.

The interval 1–104 (MGSHGKGKRD…SKKAQKKALR (104 aa)) is disordered. Residues 10 to 22 (DRSGRQKKRRDES) show a composition bias toward basic and acidic residues. Residues 25 to 45 (GSESESYTSDSDGSDDLSPPR) show a composition bias toward low complexity. The segment covering 46–61 (SSRRKKGSSSRRTRRR) has biased composition (basic residues). The segment covering 81–95 (SSKDYSEEKVTEYMS) has biased composition (basic and acidic residues). Positions 153 to 201 (SVKAEKRRHRERMTEVEKVKKRREERAVEKARHEEEMALLARERARAEF) form a coiled coil. A Phosphoserine modification is found at Ser450. The tract at residues 466–525 (VEENEEEINDTNLSDAEEAFSPEPVAEEEEADEAAEAAGSFSPELMHGDDREEAIDPEED) is disordered. Acidic residues predominate over residues 468 to 500 (ENEEEINDTNLSDAEEAFSPEPVAEEEEADEAA).

It belongs to the CACTIN family. Interacts with At5g63440.

The protein localises to the nucleus speckle. In terms of biological role, plays a role in pre-mRNA splicing by facilitating excision of a subset of introns. Required for embryogenesis. The chain is Splicing factor Cactin (CTN) from Arabidopsis thaliana (Mouse-ear cress).